Consider the following 135-residue polypeptide: Protein PsiE homolog (135 aa).

4 helical membrane-spanning segments follow: residues 20–40, 54–74, 82–102, and 107–127; these read VGLI…TIHL, YMLI…ALIV, HFPL…LIIV, and PIDT…LYLA.

This sequence belongs to the PsiE family.

The protein localises to the cell inner membrane. In Yersinia pestis (strain Pestoides F), this protein is Protein PsiE homolog.